A 229-amino-acid polypeptide reads, in one-letter code: 2-C-methyl-D-erythritol 4-phosphate cytidylyltransferase (229 aa).

This sequence belongs to the IspD/TarI cytidylyltransferase family. IspD subfamily. As to quaternary structure, homodimer.

It catalyses the reaction 2-C-methyl-D-erythritol 4-phosphate + CTP + H(+) = 4-CDP-2-C-methyl-D-erythritol + diphosphate. It functions in the pathway isoprenoid biosynthesis; isopentenyl diphosphate biosynthesis via DXP pathway; isopentenyl diphosphate from 1-deoxy-D-xylulose 5-phosphate: step 2/6. In terms of biological role, catalyzes the formation of 4-diphosphocytidyl-2-C-methyl-D-erythritol from CTP and 2-C-methyl-D-erythritol 4-phosphate (MEP). The sequence is that of 2-C-methyl-D-erythritol 4-phosphate cytidylyltransferase from Wigglesworthia glossinidia brevipalpis.